The primary structure comprises 362 residues: MEQAVHGESKRGQVTGTHLTNDISKAKKCTVIGGSGFLGQHMVEQLLERGYTVNVFDIHQGFDNPRVQFFIGDLCNQQDLYPALKGVSTVFHCASPPPYSNNKELFYRVNFIGTKTVIETCREAGVQKLILTSSASVVFEGVDIKNGTEDLPYAMKPIDYYTETKILQERAVLDANDPKKNFLTAAIRPHGIFGPRDPQLVPILIDAARKGKMKFMIGNGENLVDFTFVENVVHGHILAAEHLSQDAALGGKAFHITNDEPIPFWTFLSRILTGLNYEAPKYHIPYWMAYYLAFLLSLLVMVVSPLIQIQPTFTPIRVALAGTFHYYSCEKAKKLFGYRPLVTMDEAVERTVQSFHHLRKDK.

Methionine 1 carries the post-translational modification N-acetylmethionine. The active-site Proton acceptor is the tyrosine 161. Lysine 165 contacts NAD(+). The chain crosses the membrane as a helical span at residues 287-307; it reads WMAYYLAFLLSLLVMVVSPLI. The short motif at 359-362 is the Prevents secretion from ER element; the sequence is RKDK.

This sequence belongs to the 3-beta-HSD family. In terms of assembly, homodimer.

It localises to the endoplasmic reticulum membrane. It is found in the lipid droplet. It catalyses the reaction a 3beta-hydroxysteroid-4alpha-carboxylate + NADP(+) = a 3-oxosteroid + CO2 + NADPH. It carries out the reaction a 3beta-hydroxysteroid-4alpha-carboxylate + NAD(+) = a 3-oxosteroid + CO2 + NADH. The enzyme catalyses 4alpha-carboxyzymosterol + NADP(+) = zymosterone + CO2 + NADPH. The catalysed reaction is 4alpha-carboxy-4beta-methyl-5alpha-cholest-8-en-3beta-ol + NADP(+) = 4alpha-methyl-5alpha-cholest-8-en-3-one + CO2 + NADPH. It catalyses the reaction 4alpha-carboxy-5alpha-cholest-8-ene-3beta-ol + NADP(+) = 5alpha-cholest-8-en-3-one + CO2 + NADPH. It carries out the reaction 4beta-methylzymosterol-4alpha-carboxylate + NADP(+) = 3-dehydro-4-methylzymosterol + CO2 + NADPH. The enzyme catalyses 4beta-methylzymosterol-4alpha-carboxylate + NAD(+) = 3-dehydro-4-methylzymosterol + CO2 + NADH. The catalysed reaction is 4alpha-carboxy-5alpha-cholest-8-ene-3beta-ol + NAD(+) = 5alpha-cholest-8-en-3-one + CO2 + NADH. It catalyses the reaction 4alpha-carboxy-4beta-methyl-5alpha-cholest-8-en-3beta-ol + NAD(+) = 4alpha-methyl-5alpha-cholest-8-en-3-one + CO2 + NADH. It carries out the reaction 4alpha-carboxyzymosterol + NAD(+) = zymosterone + CO2 + NADH. It participates in steroid biosynthesis; zymosterol biosynthesis; zymosterol from lanosterol: step 4/6. Catalyzes the NAD(P)(+)-dependent oxidative decarboxylation of the C4 methyl groups of 4-alpha-carboxysterols in post-squalene cholesterol biosynthesis. Plays a role in the regulation of the endocytic trafficking of EGFR. The chain is Sterol-4-alpha-carboxylate 3-dehydrogenase, decarboxylating (Nsdhl) from Mus musculus (Mouse).